The sequence spans 190 residues: uncharacterized protein (190 aa).

2 disordered regions span residues 1–21 and 155–190; these read MALRGHPEPQPTNTPLSATVG and PEMGQNESLSEERKGHESKRKSGGRGSPSSHPTQAS. Residues 181–190 are compositionally biased toward low complexity; that stretch reads SPSSHPTQAS.

This is an uncharacterized protein from Homo sapiens (Human).